The primary structure comprises 243 residues: Asnovolin H synthase nvfL (243 aa).

7 consecutive transmembrane segments (helical) span residues 20–42 (ANTL…AYYS), 51–71 (ALIP…IHCP), 75–95 (FVRI…YAAI), 112–132 (LPFI…ALAA), 138–160 (IAFV…SQLL), 169–189 (SYVV…MVTI), and 205–225 (LLLW…FCFY).

This sequence belongs to the paxB family.

The protein resides in the membrane. It catalyses the reaction (3R)-[(10S)-11-epoxyfarnesyl]-2,3,5-trimethyl-6-oxido-4-oxocyclohexa-1,5-diene-1-carboxylate + H(+) = asnovolin H. Its pathway is secondary metabolite biosynthesis; terpenoid biosynthesis. Functionally, terpene cyclase; part of the gene cluster that mediates the biosynthesis of novofumigatonin, a heavily oxygenated meroterpenoid containing a unique orthoester moiety. The first step of the pathway is the synthesis of 3,5-dimethylorsellinic acid (DMOA) by the polyketide synthase nvfA via condensation of one acetyl-CoA starter unit with 3 malonyl-CoA units and 2 methylations. DMOA is then converted to farnesyl-DMOA by the farnesyltransferase nvfB. Epoxydation by FAD-dependent monooxygenase nvfK, followed by a protonation-initiated cyclization catalyzed by the terpene cyclase nvfL leads to the production of asnavolin H. The short chain dehydrogenase nvfC then as a 3-OH dehydrogenase of asnovolin H to yield chemesin D. There are two branches to synthesize asnovolin A from chemesin D. In one branch, chemesin D undergoes Baeyer-Villiger oxidation by nvfH, methylation by nvfJ, and enoyl reduction by the nvfM D enoylreductase that reduces the double bond between C-5'and C-6', to form respectively asnovolin I, asnovolin K, and asnovolin A. In the other branch, the methylation precedes the Baeyer-Villiger oxidation and the enoyl reduction to yield asnovolin A via the asnovolin J intermediate. Asnovolin A is further converted to fumigatonoid A by the Fe(II)/2-oxoglutarate-dependent dioxygenase nvfI that catalyzes an endoperoxidation reaction. The alpha/beta hydrolase nvfD then acts as an epimerase that converts fumigatonoid A to its C-5' epimer, which then undergoes spontaneous or nvfD-catalyzed lactonization. The following step utilizes the ketoreductase nvfG to produce fumigatonoid B. The dioxygenase nvfE further converts fumigatonoid B into fumigatonoid C. Finally the Fe(II)/2-oxoglutarate-dependent dioxygenase nvfF catalyzes two rounds of oxidation to transform fumigatonoid C into the end product, novofumigatonin A. This is Asnovolin H synthase nvfL from Aspergillus novofumigatus (strain IBT 16806).